The sequence spans 119 residues: Large ribosomal subunit protein bL20 (119 aa).

The protein belongs to the bacterial ribosomal protein bL20 family.

Functionally, binds directly to 23S ribosomal RNA and is necessary for the in vitro assembly process of the 50S ribosomal subunit. It is not involved in the protein synthesizing functions of that subunit. The sequence is that of Large ribosomal subunit protein bL20 from Teredinibacter turnerae (strain ATCC 39867 / T7901).